The chain runs to 128 residues: Fruiting body differentiation protein 16 (128 aa).

An N-terminal signal peptide occupies residues 1–19 (MLFSHIVFVALSVFGLVQA).

Plays a role in the regulation of fruiting body development. This is Fruiting body differentiation protein 16 from Flammulina velutipes (Agaricus velutipes).